The following is a 207-amino-acid chain: Recombination protein RecR (207 aa).

The C4-type zinc finger occupies cysteine 60–cysteine 75. Residues serine 83 to alanine 178 form the Toprim domain.

Belongs to the RecR family.

Its function is as follows. May play a role in DNA repair. It seems to be involved in an RecBC-independent recombinational process of DNA repair. It may act with RecF and RecO. The chain is Recombination protein RecR from Porphyromonas gingivalis (strain ATCC BAA-308 / W83).